A 47-amino-acid chain; its full sequence is Defensin Tk-AMP-D1.1 (47 aa).

4 disulfides stabilise this stretch: Cys3–Cys47, Cys14–Cys34, Cys20–Cys41, and Cys24–Cys43.

Its function is as follows. Plant defense peptide. This Triticum kiharae (Wheat) protein is Defensin Tk-AMP-D1.1.